Here is a 96-residue protein sequence, read N- to C-terminus: Large ribosomal subunit protein bL27 (96 aa).

The propeptide occupies 1 to 9; the sequence is MLRLDLQFF. Residues 1–36 form a disordered region; it reads MLRLDLQFFSTKKGQGSSKNGRDSESKRLGSKRADG. The span at 8-19 shows a compositional bias: polar residues; it reads FFSTKKGQGSSK. The segment covering 20-35 has biased composition (basic and acidic residues); that stretch reads NGRDSESKRLGSKRAD.

The protein belongs to the bacterial ribosomal protein bL27 family. In terms of processing, the N-terminus is cleaved by ribosomal processing cysteine protease Prp.

The protein is Large ribosomal subunit protein bL27 of Oceanobacillus iheyensis (strain DSM 14371 / CIP 107618 / JCM 11309 / KCTC 3954 / HTE831).